Here is a 371-residue protein sequence, read N- to C-terminus: tRNA-specific 2-thiouridylase MnmA (371 aa).

ATP-binding positions include 16–23 and Met-42; that span reads GMSGGVDS. The interval 102–104 is interaction with target base in tRNA; sequence NPD. Cys-107 acts as the Nucleophile in catalysis. A disulfide bridge connects residues Cys-107 and Cys-204. Gly-132 provides a ligand contact to ATP. The tract at residues 154–156 is interaction with tRNA; it reads KDQ. Cys-204 serves as the catalytic Cysteine persulfide intermediate. Residues 316 to 317 form an interaction with tRNA region; sequence RY.

This sequence belongs to the MnmA/TRMU family.

The protein resides in the cytoplasm. The catalysed reaction is S-sulfanyl-L-cysteinyl-[protein] + uridine(34) in tRNA + AH2 + ATP = 2-thiouridine(34) in tRNA + L-cysteinyl-[protein] + A + AMP + diphosphate + H(+). Functionally, catalyzes the 2-thiolation of uridine at the wobble position (U34) of tRNA, leading to the formation of s(2)U34. In Shewanella pealeana (strain ATCC 700345 / ANG-SQ1), this protein is tRNA-specific 2-thiouridylase MnmA.